The primary structure comprises 155 residues: Ribosomal RNA large subunit methyltransferase H (155 aa).

Residues L72, G103, and 122-127 (LSPLTL) contribute to the S-adenosyl-L-methionine site.

This sequence belongs to the RNA methyltransferase RlmH family. As to quaternary structure, homodimer.

The protein resides in the cytoplasm. It carries out the reaction pseudouridine(1915) in 23S rRNA + S-adenosyl-L-methionine = N(3)-methylpseudouridine(1915) in 23S rRNA + S-adenosyl-L-homocysteine + H(+). In terms of biological role, specifically methylates the pseudouridine at position 1915 (m3Psi1915) in 23S rRNA. The protein is Ribosomal RNA large subunit methyltransferase H of Pasteurella multocida (strain Pm70).